The sequence spans 128 residues: Phosphoribosyl-AMP cyclohydrolase (128 aa).

Asp77 lines the Mg(2+) pocket. A Zn(2+)-binding site is contributed by Cys78. Residues Asp79 and Asp81 each coordinate Mg(2+). Zn(2+) contacts are provided by Cys95 and Cys102.

Belongs to the PRA-CH family. As to quaternary structure, homodimer. Mg(2+) serves as cofactor. It depends on Zn(2+) as a cofactor.

The protein localises to the cytoplasm. The catalysed reaction is 1-(5-phospho-beta-D-ribosyl)-5'-AMP + H2O = 1-(5-phospho-beta-D-ribosyl)-5-[(5-phospho-beta-D-ribosylamino)methylideneamino]imidazole-4-carboxamide. The protein operates within amino-acid biosynthesis; L-histidine biosynthesis; L-histidine from 5-phospho-alpha-D-ribose 1-diphosphate: step 3/9. In terms of biological role, catalyzes the hydrolysis of the adenine ring of phosphoribosyl-AMP. The sequence is that of Phosphoribosyl-AMP cyclohydrolase from Methylococcus capsulatus (strain ATCC 33009 / NCIMB 11132 / Bath).